A 651-amino-acid chain; its full sequence is p-hydroxybenzoic acid efflux pump subunit AaeB (651 aa).

Helical transmembrane passes span 11–31 (FAFK…HLQL), 41–61 (AAIV…SGAI), 67–87 (LRII…VLTI), 91–111 (VLTL…SSLV), 119–139 (FGLA…TPLL), 150–170 (EIVL…PRSI), 368–388 (LFWL…IAVV), 405–425 (FLVG…FIIP), 429–449 (QSML…GIEV), 455–475 (GSLG…PMIF), and 481–501 (LDSA…LLLI).

This sequence belongs to the aromatic acid exporter ArAE (TC 2.A.85) family.

It is found in the cell inner membrane. Forms an efflux pump with AaeA. Could function as a metabolic relief valve, allowing to eliminate certain compounds when they accumulate to high levels in the cell. The sequence is that of p-hydroxybenzoic acid efflux pump subunit AaeB from Yersinia pseudotuberculosis serotype O:1b (strain IP 31758).